The sequence spans 255 residues: Lipoprotein-releasing system ATP-binding protein LolD 2 (255 aa).

Residues 9 to 254 form the ABC transporter domain; it reads LEARGIRKSY…SDSAKLETVA (246 aa). Position 45–52 (45–52) interacts with ATP; that stretch reads GRSGSGKS.

Belongs to the ABC transporter superfamily. Lipoprotein translocase (TC 3.A.1.125) family. As to quaternary structure, the complex is composed of two ATP-binding proteins (LolD) and two transmembrane proteins (LolC and LolE).

It localises to the cell inner membrane. Its function is as follows. Part of the ABC transporter complex LolCDE involved in the translocation of mature outer membrane-directed lipoproteins, from the inner membrane to the periplasmic chaperone, LolA. Responsible for the formation of the LolA-lipoprotein complex in an ATP-dependent manner. The polypeptide is Lipoprotein-releasing system ATP-binding protein LolD 2 (Rhodopirellula baltica (strain DSM 10527 / NCIMB 13988 / SH1)).